Consider the following 806-residue polypeptide: Leucine--tRNA ligase (806 aa).

Positions 38–48 (PYPSGEIHMGH) match the 'HIGH' region motif. The 'KMSKS' region signature appears at 572–576 (KMSKS). ATP is bound at residue Lys-575.

The protein belongs to the class-I aminoacyl-tRNA synthetase family.

Its subcellular location is the cytoplasm. The catalysed reaction is tRNA(Leu) + L-leucine + ATP = L-leucyl-tRNA(Leu) + AMP + diphosphate. The polypeptide is Leucine--tRNA ligase (Helicobacter pylori (strain J99 / ATCC 700824) (Campylobacter pylori J99)).